Here is a 143-residue protein sequence, read N- to C-terminus: Cofilin (143 aa).

Residues 5–137 form the ADF-H domain; that stretch reads GVAVADESLT…AYESVLEKVS (133 aa).

This sequence belongs to the actin-binding proteins ADF family.

The protein localises to the cytoplasm. Its subcellular location is the cytoskeleton. It localises to the nucleus matrix. Its function is as follows. Controls reversibly actin polymerization and depolymerization in a pH-sensitive manner. It has the ability to bind G- and F-actin in a 1:1 ratio of cofilin to actin. Binding to F-actin is regulated by tropomyosin. It is the major component of intranuclear and cytoplasmic actin rods. Required for accumulation of actin at the cell division site via depolymerizing actin at the cell ends. In association with myosin II has a role in the assembly of the contractile ring via severing actin filaments. Involved in the maintenance of the contractile ring once formed. In association with profilin and capping protein, has a role in the mitotic reorganization of the actin cytoskeleton. The polypeptide is Cofilin (COF1) (Eremothecium gossypii (strain ATCC 10895 / CBS 109.51 / FGSC 9923 / NRRL Y-1056) (Yeast)).